We begin with the raw amino-acid sequence, 155 residues long: Small ribosomal subunit protein uS7c (155 aa).

The protein belongs to the universal ribosomal protein uS7 family. Part of the 30S ribosomal subunit.

The protein resides in the plastid. Its subcellular location is the chloroplast. In terms of biological role, one of the primary rRNA binding proteins, it binds directly to 16S rRNA where it nucleates assembly of the head domain of the 30S subunit. This Spirogyra maxima (Green alga) protein is Small ribosomal subunit protein uS7c (rps7).